The following is an 86-amino-acid chain: MLCDVYRSSKKADTYLYLPHGNEFTDVPDVLLGQFGRAEKVLTINLANREQLARLTVEKLQQHLHNDGFYLQLPPKREELQVNVNK.

The region spanning 1–85 is the YcgL domain; that stretch reads MLCDVYRSSK…KREELQVNVN (85 aa).

This is YcgL domain-containing protein IL1825 from Idiomarina loihiensis (strain ATCC BAA-735 / DSM 15497 / L2-TR).